Reading from the N-terminus, the 152-residue chain is Aspartate carbamoyltransferase regulatory chain (152 aa).

Positions 108, 113, 136, and 139 each coordinate Zn(2+).

This sequence belongs to the PyrI family. In terms of assembly, contains catalytic and regulatory chains. Requires Zn(2+) as cofactor.

Its function is as follows. Involved in allosteric regulation of aspartate carbamoyltransferase. The protein is Aspartate carbamoyltransferase regulatory chain of Pyrococcus furiosus (strain ATCC 43587 / DSM 3638 / JCM 8422 / Vc1).